A 620-amino-acid chain; its full sequence is Translation initiation factor IF-2 (620 aa).

The region spanning E119 to L288 is the tr-type G domain. The segment at G128–T135 is G1. G128 to T135 contacts GTP. The G2 stretch occupies residues G153 to A157. A G3 region spans residues D175 to G178. Residues D175–H179 and N229–D232 contribute to the GTP site. The segment at N229 to D232 is G4. The interval S265–I267 is G5.

This sequence belongs to the TRAFAC class translation factor GTPase superfamily. Classic translation factor GTPase family. IF-2 subfamily.

The protein localises to the cytoplasm. Functionally, one of the essential components for the initiation of protein synthesis. Protects formylmethionyl-tRNA from spontaneous hydrolysis and promotes its binding to the 30S ribosomal subunits. Also involved in the hydrolysis of GTP during the formation of the 70S ribosomal complex. This Mycoplasma mycoides subsp. mycoides SC (strain CCUG 32753 / NCTC 10114 / PG1) protein is Translation initiation factor IF-2.